The following is a 313-amino-acid chain: Sideroflexin-4 (313 aa).

The next 5 helical transmembrane spans lie at 87–107 (AALL…VKSL), 141–161 (LLLG…PRLL), 175–191 (FIPV…NVIA), 230–247 (VVLF…AYFF), and 269–289 (VLVM…IGRI).

This sequence belongs to the sideroflexin family.

The protein localises to the mitochondrion inner membrane. In terms of biological role, mitochondrial amino-acid transporter. Does not act as a serine transporter: not able to mediate transport of serine into mitochondria. The chain is Sideroflexin-4 from Bos taurus (Bovine).